The primary structure comprises 81 residues: uncharacterized protein (81 aa).

The signal sequence occupies residues Met-1–Ala-31. A helical membrane pass occupies residues Trp-52–Gly-74.

It localises to the membrane. This is an uncharacterized protein from Pasteurella multocida (strain Pm70).